A 508-amino-acid polypeptide reads, in one-letter code: Aldehyde dehydrogenase family 7 member B4 (508 aa).

NAD(+) is bound at residue 244 to 249 (GSSRVG). Catalysis depends on E266, which acts as the Proton acceptor. The active-site Nucleophile is the C300.

It belongs to the aldehyde dehydrogenase family. In terms of assembly, homotetramer.

The enzyme catalyses an aldehyde + NAD(+) + H2O = a carboxylate + NADH + 2 H(+). The chain is Aldehyde dehydrogenase family 7 member B4 (ALDH7B4) from Arabidopsis thaliana (Mouse-ear cress).